The primary structure comprises 316 residues: 1-phosphofructokinase (316 aa).

Residues 225–230 (SMGAGG) and 256–257 (GD) each bind ATP. Asp-257 acts as the Proton acceptor in catalysis.

Belongs to the carbohydrate kinase PfkB family.

It carries out the reaction beta-D-fructose 1-phosphate + ATP = beta-D-fructose 1,6-bisphosphate + ADP + H(+). Functionally, catalyzes the ATP-dependent phosphorylation of fructose-l-phosphate to fructose-l,6-bisphosphate. This Rhodobacter capsulatus (Rhodopseudomonas capsulata) protein is 1-phosphofructokinase.